A 73-amino-acid polypeptide reads, in one-letter code: Cx9C motif-containing protein 4, mitochondrial (73 aa).

Residues 2-44 (SNPCQKEACAIQDCLLSHQYDDAKCAKVIDQLYICCSKFYNDN) form the CHCH domain. 2 short sequence motifs (cx9C motif) span residues 5–15 (CQKEACAIQDC) and 26–36 (CAKVIDQLYIC). Intrachain disulfides connect Cys5-Cys36 and Cys15-Cys26.

Belongs to the CMC4 family.

The protein resides in the mitochondrion intermembrane space. This Saccharomyces cerevisiae (strain ATCC 204508 / S288c) (Baker's yeast) protein is Cx9C motif-containing protein 4, mitochondrial (CMC4).